The primary structure comprises 127 residues: uncharacterized protein (127 aa).

2 helical membrane passes run 42-62 and 78-98; these read LLIS…IAFI and GLPI…YYFL.

Its subcellular location is the membrane. This is an uncharacterized protein from Schizosaccharomyces pombe (strain 972 / ATCC 24843) (Fission yeast).